The chain runs to 255 residues: tRNA (guanine-N(1)-)-methyltransferase (255 aa).

S-adenosyl-L-methionine contacts are provided by residues G113 and 133 to 138 (IGDYVL).

Belongs to the RNA methyltransferase TrmD family. Homodimer.

It is found in the cytoplasm. It catalyses the reaction guanosine(37) in tRNA + S-adenosyl-L-methionine = N(1)-methylguanosine(37) in tRNA + S-adenosyl-L-homocysteine + H(+). Specifically methylates guanosine-37 in various tRNAs. The protein is tRNA (guanine-N(1)-)-methyltransferase of Escherichia coli O127:H6 (strain E2348/69 / EPEC).